We begin with the raw amino-acid sequence, 122 residues long: Large ribosomal subunit protein uL18 (122 aa).

Residues 1–27 (MSNLSRKQQTQKRHRRLRRHLNGTAQR) are disordered. The span at 9-21 (QTQKRHRRLRRHL) shows a compositional bias: basic residues.

This sequence belongs to the universal ribosomal protein uL18 family. Part of the 50S ribosomal subunit; part of the 5S rRNA/L5/L18/L25 subcomplex. Contacts the 5S and 23S rRNAs.

Its function is as follows. This is one of the proteins that bind and probably mediate the attachment of the 5S RNA into the large ribosomal subunit, where it forms part of the central protuberance. The sequence is that of Large ribosomal subunit protein uL18 from Prochlorococcus marinus (strain MIT 9303).